The primary structure comprises 555 residues: MTRYIFITGGVVSSLGKGITSASLGAILEAQGLTVTLLKLDPYINVDPGTMSPFQHGEVFVTEDGAETDLDLGHYERFVNATMTRKNNFTTGRVYADVIRKERRGDYLGGTIQVIPHITDEIKAKIREGADGADVALVEVGGTVGDIESLPFLEAIRQMRIELGDQQTLFIHLTLVPYVAVAGEIKTKPTQHSVKELRSIGIQPDILVCRSEQSLPDAERAKIALFTNVPEPSVISLSDVKSIYEIPLILRDQGLGNRVCEKLNIKATAADLDDWKKVVQAQKNPRHTVTVAVVGKYVDLEDSYKSLSEALIHAGIHTQTRVVIEYIDSEAIELHGTELLKKVDAILVPGGFGSRGIEGKILAAQYARENGIPYFGICLGMQIAIIEFARDKAQMENANSTEFDPKTPFPVVALVSEWMAKEGIIEKRKWGDDLGGTMRLGGQPCRLKIDSLARRLYGEDRVIERHRHRYEVNNDLIGELEKKGLVISGRSIDDRLVEMIELADHPWFVGCQFHPEFTSTPRKGHPLFIGFIKAGLAAKEAKKAVLAAPSQEKTD.

The amidoligase domain stretch occupies residues 1-265 (MTRYIFITGG…GNRVCEKLNI (265 aa)). Ser-13 is a binding site for CTP. Ser-13 provides a ligand contact to UTP. Residues 14–19 (SLGKGI) and Asp-71 each bind ATP. Residues Asp-71 and Glu-139 each coordinate Mg(2+). Residues 146 to 148 (DIE), 186 to 191 (KTKPTQ), and Lys-222 contribute to the CTP site. UTP contacts are provided by residues 186 to 191 (KTKPTQ) and Lys-222. The Glutamine amidotransferase type-1 domain occupies 290-541 (TVAVVGKYVD…IKAGLAAKEA (252 aa)). Gly-351 contacts L-glutamine. Cys-378 functions as the Nucleophile; for glutamine hydrolysis in the catalytic mechanism. Residues 379–382 (LGMQ), Glu-402, and Arg-469 each bind L-glutamine. Active-site residues include His-514 and Glu-516.

It belongs to the CTP synthase family. In terms of assembly, homotetramer.

It carries out the reaction UTP + L-glutamine + ATP + H2O = CTP + L-glutamate + ADP + phosphate + 2 H(+). The enzyme catalyses L-glutamine + H2O = L-glutamate + NH4(+). The catalysed reaction is UTP + NH4(+) + ATP = CTP + ADP + phosphate + 2 H(+). The protein operates within pyrimidine metabolism; CTP biosynthesis via de novo pathway; CTP from UDP: step 2/2. Allosterically activated by GTP, when glutamine is the substrate; GTP has no effect on the reaction when ammonia is the substrate. The allosteric effector GTP functions by stabilizing the protein conformation that binds the tetrahedral intermediate(s) formed during glutamine hydrolysis. Inhibited by the product CTP, via allosteric rather than competitive inhibition. Functionally, catalyzes the ATP-dependent amination of UTP to CTP with either L-glutamine or ammonia as the source of nitrogen. Regulates intracellular CTP levels through interactions with the four ribonucleotide triphosphates. The sequence is that of CTP synthase from Coxiella burnetii (strain RSA 331 / Henzerling II).